A 360-amino-acid chain; its full sequence is Phenylalanine--tRNA ligase alpha subunit (360 aa).

Residue Glu260 coordinates Mg(2+).

This sequence belongs to the class-II aminoacyl-tRNA synthetase family. Phe-tRNA synthetase alpha subunit type 1 subfamily. In terms of assembly, tetramer of two alpha and two beta subunits. Mg(2+) serves as cofactor.

The protein localises to the cytoplasm. The catalysed reaction is tRNA(Phe) + L-phenylalanine + ATP = L-phenylalanyl-tRNA(Phe) + AMP + diphosphate + H(+). In Methylocella silvestris (strain DSM 15510 / CIP 108128 / LMG 27833 / NCIMB 13906 / BL2), this protein is Phenylalanine--tRNA ligase alpha subunit.